The chain runs to 134 residues: MPTIQQLVRKGRESFADKSKSPALNSCPQRRGVCVRVYTTTPRKPNSAMRKVARVRLTNSKEVNAYIPGEGHNLQEHSIVLVRGGRVKDLPGVRYHIVRGTLDTAGVNGRTQRRSKYGAKRPKPGQAPAAKGKK.

The disordered stretch occupies residues 1-27; sequence MPTIQQLVRKGRESFADKSKSPALNSC. A compositionally biased stretch (basic and acidic residues) spans 10-20; it reads KGRESFADKSK. Aspartate 89 is modified (3-methylthioaspartic acid). The interval 103–134 is disordered; the sequence is DTAGVNGRTQRRSKYGAKRPKPGQAPAAKGKK. The span at 111 to 123 shows a compositional bias: basic residues; sequence TQRRSKYGAKRPK. Positions 124–134 are enriched in low complexity; that stretch reads PGQAPAAKGKK.

Belongs to the universal ribosomal protein uS12 family. Part of the 30S ribosomal subunit. Contacts proteins S8 and S17. May interact with IF1 in the 30S initiation complex.

Its function is as follows. With S4 and S5 plays an important role in translational accuracy. Functionally, interacts with and stabilizes bases of the 16S rRNA that are involved in tRNA selection in the A site and with the mRNA backbone. Located at the interface of the 30S and 50S subunits, it traverses the body of the 30S subunit contacting proteins on the other side and probably holding the rRNA structure together. The combined cluster of proteins S8, S12 and S17 appears to hold together the shoulder and platform of the 30S subunit. The sequence is that of Small ribosomal subunit protein uS12 from Porphyromonas gingivalis (strain ATCC 33277 / DSM 20709 / CIP 103683 / JCM 12257 / NCTC 11834 / 2561).